The following is a 298-amino-acid chain: Urease accessory protein UreD 3 (298 aa).

The tract at residues 1–30 is disordered; that stretch reads MADEAGTRSAGGRPIPAAEPLRPALSRQRS.

It belongs to the UreD family. In terms of assembly, ureD, UreF and UreG form a complex that acts as a GTP-hydrolysis-dependent molecular chaperone, activating the urease apoprotein by helping to assemble the nickel containing metallocenter of UreC. The UreE protein probably delivers the nickel.

The protein localises to the cytoplasm. In terms of biological role, required for maturation of urease via the functional incorporation of the urease nickel metallocenter. This chain is Urease accessory protein UreD 3, found in Methylorubrum extorquens (strain PA1) (Methylobacterium extorquens).